Consider the following 125-residue polypeptide: Holo-[acyl-carrier-protein] synthase (125 aa).

Residues Asp8 and Glu57 each contribute to the Mg(2+) site.

It belongs to the P-Pant transferase superfamily. AcpS family. The cofactor is Mg(2+).

The protein localises to the cytoplasm. The enzyme catalyses apo-[ACP] + CoA = holo-[ACP] + adenosine 3',5'-bisphosphate + H(+). Its function is as follows. Transfers the 4'-phosphopantetheine moiety from coenzyme A to a Ser of acyl-carrier-protein. This Halothermothrix orenii (strain H 168 / OCM 544 / DSM 9562) protein is Holo-[acyl-carrier-protein] synthase.